The chain runs to 184 residues: ATP synthase subunit b, chloroplastic (184 aa).

Residues 27 to 49 (LATNLINLSVVFGVLIFFGKGVL) traverse the membrane as a helical segment.

Belongs to the ATPase B chain family. As to quaternary structure, F-type ATPases have 2 components, F(1) - the catalytic core - and F(0) - the membrane proton channel. F(1) has five subunits: alpha(3), beta(3), gamma(1), delta(1), epsilon(1). F(0) has four main subunits: a(1), b(1), b'(1) and c(10-14). The alpha and beta chains form an alternating ring which encloses part of the gamma chain. F(1) is attached to F(0) by a central stalk formed by the gamma and epsilon chains, while a peripheral stalk is formed by the delta, b and b' chains.

The protein resides in the plastid. The protein localises to the chloroplast thylakoid membrane. F(1)F(0) ATP synthase produces ATP from ADP in the presence of a proton or sodium gradient. F-type ATPases consist of two structural domains, F(1) containing the extramembraneous catalytic core and F(0) containing the membrane proton channel, linked together by a central stalk and a peripheral stalk. During catalysis, ATP synthesis in the catalytic domain of F(1) is coupled via a rotary mechanism of the central stalk subunits to proton translocation. Functionally, component of the F(0) channel, it forms part of the peripheral stalk, linking F(1) to F(0). The sequence is that of ATP synthase subunit b, chloroplastic from Aethionema cordifolium (Lebanon stonecress).